The sequence spans 121 residues: Ribulose bisphosphate carboxylase small subunit (121 aa).

Belongs to the RuBisCO small chain family. As to quaternary structure, heterohexadecamer of 8 large and 8 small subunits.

Functionally, ruBisCO catalyzes two reactions: the carboxylation of D-ribulose 1,5-bisphosphate, the primary event in carbon dioxide fixation, as well as the oxidative fragmentation of the pentose substrate. Both reactions occur simultaneously and in competition at the same active site. Although the small subunit is not catalytic it is essential for maximal activity. The protein is Ribulose bisphosphate carboxylase small subunit of Alvinoconcha hessleri symbiotic bacterium.